A 504-amino-acid polypeptide reads, in one-letter code: MTKEKKKTGIEPKVFFPPLIIVGILCWLTVRDLDAANVVINAVFSYVTNVWGWAFEWYMVVMLFGWFWLVFGPYAKKRLGNEPPEFSTASWIFMMFASCTSAAVLFWGSIEIYYYISTPPFALEPNSTGAKELGLAYSLFHWGPLPWATYSFLSVAFAYFFFVRKMDVIRPSSTLVPLVGEKHAKGLFGTIVDNFYLVALIFAMGTSLGLATPLVTECMQWLFGIPHTLQLDAIIITCWIILNAICVACGLQKGVKIASDVRSYLSFLMLGWVFIVSGASFIMNYFTDSVGMLLMYLPRMLFYTDAVGKGGFPQGWTVFYWAWWVIYAIQMSIFLARISRGRTVRELCFGMVMGLTASTWILWTVLGSNTLLLMDKNIINIPNLIEQYGVARAIIETWAALPLSTATMWGFFILCFIATVTLINACSYTLAMSTCREVRDGEEPPLLVRIGWSILVGIIGIVLLALGGLKPIQTAIIAGGCPLFFVNIMVTLSFIKDAKQNWKD.

12 helical membrane-spanning segments follow: residues 10–30 (IEPK…WLTV), 51–71 (WGWA…WLVF), 92–112 (IFMM…SIEI), 143–163 (GPLP…FFFV), 195–215 (FYLV…TPLV), 231–251 (LDAI…ACGL), 263–283 (SYLS…SFIM), 316–336 (WTVF…IFLA), 347–367 (LCFG…TVLG), 403–423 (LSTA…VTLI), 446–466 (LLVR…LLAL), and 475–495 (AIIA…LSFI).

It belongs to the BCCT transporter (TC 2.A.15) family. CaiT subfamily. As to quaternary structure, homotrimer.

It localises to the cell inner membrane. It carries out the reaction 4-(trimethylamino)butanoate(in) + (R)-carnitine(out) = 4-(trimethylamino)butanoate(out) + (R)-carnitine(in). It functions in the pathway amine and polyamine metabolism; carnitine metabolism. Functionally, catalyzes the exchange of L-carnitine for gamma-butyrobetaine. In Escherichia fergusonii (strain ATCC 35469 / DSM 13698 / CCUG 18766 / IAM 14443 / JCM 21226 / LMG 7866 / NBRC 102419 / NCTC 12128 / CDC 0568-73), this protein is L-carnitine/gamma-butyrobetaine antiporter.